The sequence spans 144 residues: Large ribosomal subunit protein uL11 (144 aa).

The protein belongs to the universal ribosomal protein uL11 family. As to quaternary structure, part of the ribosomal stalk of the 50S ribosomal subunit. Interacts with L10 and the large rRNA to form the base of the stalk. L10 forms an elongated spine to which L12 dimers bind in a sequential fashion forming a multimeric L10(L12)X complex. One or more lysine residues are methylated.

Forms part of the ribosomal stalk which helps the ribosome interact with GTP-bound translation factors. The protein is Large ribosomal subunit protein uL11 of Acidiphilium cryptum (strain JF-5).